The primary structure comprises 429 residues: Asparagine--tRNA ligase (429 aa).

It belongs to the class-II aminoacyl-tRNA synthetase family.

Its subcellular location is the cytoplasm. The catalysed reaction is tRNA(Asn) + L-asparagine + ATP = L-asparaginyl-tRNA(Asn) + AMP + diphosphate + H(+). In Thermoplasma acidophilum (strain ATCC 25905 / DSM 1728 / JCM 9062 / NBRC 15155 / AMRC-C165), this protein is Asparagine--tRNA ligase.